The following is a 445-amino-acid chain: tRNA-2-methylthio-N(6)-dimethylallyladenosine synthase (445 aa).

The MTTase N-terminal domain occupies 2–117; sequence QGLYIKSYGC…LPELIVKARK (116 aa). Positions 11, 47, 80, 157, 161, and 164 each coordinate [4Fe-4S] cluster. The Radical SAM core domain occupies 143-374; it reads KNQKVSAFIS…QELVHKQQLE (232 aa). The region spanning 377–441 is the TRAM domain; the sequence is KKMIGETHPV…KNHLTGIIPN (65 aa).

This sequence belongs to the methylthiotransferase family. MiaB subfamily. Monomer. [4Fe-4S] cluster serves as cofactor.

The protein localises to the cytoplasm. It carries out the reaction N(6)-dimethylallyladenosine(37) in tRNA + (sulfur carrier)-SH + AH2 + 2 S-adenosyl-L-methionine = 2-methylsulfanyl-N(6)-dimethylallyladenosine(37) in tRNA + (sulfur carrier)-H + 5'-deoxyadenosine + L-methionine + A + S-adenosyl-L-homocysteine + 2 H(+). Its function is as follows. Catalyzes the methylthiolation of N6-(dimethylallyl)adenosine (i(6)A), leading to the formation of 2-methylthio-N6-(dimethylallyl)adenosine (ms(2)i(6)A) at position 37 in tRNAs that read codons beginning with uridine. The polypeptide is tRNA-2-methylthio-N(6)-dimethylallyladenosine synthase (Ehrlichia ruminantium (strain Welgevonden)).